The primary structure comprises 421 residues: Extracellular signal-regulated kinase 1 (421 aa).

The Protein kinase domain occupies 70-375 (YQILEIVGEG…VEDALKHPYL (306 aa)). ATP contacts are provided by residues 76–84 (VGEGAYGIV) and Lys-99. Catalysis depends on Asp-194, which acts as the Proton acceptor. Position 230 is a phosphothreonine (Thr-230). Positions 230-232 (TEY) match the TXY motif. Tyr-232 carries the phosphotyrosine modification.

The protein belongs to the protein kinase superfamily. CMGC Ser/Thr protein kinase family. MAP kinase subfamily. It depends on Mg(2+) as a cofactor. Post-translationally, dually phosphorylated on Thr-230 and Tyr-232, which activates the enzyme.

It catalyses the reaction L-seryl-[protein] + ATP = O-phospho-L-seryl-[protein] + ADP + H(+). It carries out the reaction L-threonyl-[protein] + ATP = O-phospho-L-threonyl-[protein] + ADP + H(+). With respect to regulation, activated by tyrosine and threonine phosphorylation. This chain is Extracellular signal-regulated kinase 1 (CEK1), found in Candida albicans (strain SC5314 / ATCC MYA-2876) (Yeast).